Reading from the N-terminus, the 338-residue chain is Large ribosomal subunit protein uL10 (338 aa).

The disordered stretch occupies residues Glu-295–Gly-338. Acidic residues predominate over residues Glu-312–Ala-330.

It belongs to the universal ribosomal protein uL10 family. As to quaternary structure, part of the 50S ribosomal subunit. Forms part of the ribosomal stalk which helps the ribosome interact with GTP-bound translation factors. Forms a heptameric L10(L12)2(L12)2(L12)2 complex, where L10 forms an elongated spine to which the L12 dimers bind in a sequential fashion.

Forms part of the ribosomal stalk, playing a central role in the interaction of the ribosome with GTP-bound translation factors. The sequence is that of Large ribosomal subunit protein uL10 from Staphylothermus marinus (strain ATCC 43588 / DSM 3639 / JCM 9404 / F1).